A 73-amino-acid chain; its full sequence is Putative defensin-like protein 42 (73 aa).

Cystine bridges form between Cys-6–Cys-58, Cys-18–Cys-41, Cys-27–Cys-50, and Cys-31–Cys-52.

Belongs to the DEFL family.

The polypeptide is Putative defensin-like protein 42 (Arabidopsis thaliana (Mouse-ear cress)).